Consider the following 613-residue polypeptide: 4-hydroxy-3-methylbut-2-en-1-yl diphosphate synthase (flavodoxin) (613 aa).

Positions 521, 524, 555, and 562 each coordinate [4Fe-4S] cluster.

This sequence belongs to the IspG family. It depends on [4Fe-4S] cluster as a cofactor.

The catalysed reaction is (2E)-4-hydroxy-3-methylbut-2-enyl diphosphate + oxidized [flavodoxin] + H2O + 2 H(+) = 2-C-methyl-D-erythritol 2,4-cyclic diphosphate + reduced [flavodoxin]. It participates in isoprenoid biosynthesis; isopentenyl diphosphate biosynthesis via DXP pathway; isopentenyl diphosphate from 1-deoxy-D-xylulose 5-phosphate: step 5/6. Functionally, converts 2C-methyl-D-erythritol 2,4-cyclodiphosphate (ME-2,4cPP) into 1-hydroxy-2-methyl-2-(E)-butenyl 4-diphosphate. In Bacteroides thetaiotaomicron (strain ATCC 29148 / DSM 2079 / JCM 5827 / CCUG 10774 / NCTC 10582 / VPI-5482 / E50), this protein is 4-hydroxy-3-methylbut-2-en-1-yl diphosphate synthase (flavodoxin).